Here is a 157-residue protein sequence, read N- to C-terminus: 2-C-methyl-D-erythritol 2,4-cyclodiphosphate synthase (157 aa).

Asp-8 and His-10 together coordinate a divalent metal cation. Residues 8–10 (DVH) and 34–35 (HS) each bind 4-CDP-2-C-methyl-D-erythritol 2-phosphate. His-42 contacts a divalent metal cation. 4-CDP-2-C-methyl-D-erythritol 2-phosphate is bound by residues 56 to 58 (DIG), 61 to 65 (FPDTD), 100 to 106 (AQAPKMA), 132 to 135 (TTTE), Phe-139, and Arg-142.

The protein belongs to the IspF family. Homotrimer. Requires a divalent metal cation as cofactor.

It catalyses the reaction 4-CDP-2-C-methyl-D-erythritol 2-phosphate = 2-C-methyl-D-erythritol 2,4-cyclic diphosphate + CMP. The protein operates within isoprenoid biosynthesis; isopentenyl diphosphate biosynthesis via DXP pathway; isopentenyl diphosphate from 1-deoxy-D-xylulose 5-phosphate: step 4/6. Involved in the biosynthesis of isopentenyl diphosphate (IPP) and dimethylallyl diphosphate (DMAPP), two major building blocks of isoprenoid compounds. Catalyzes the conversion of 4-diphosphocytidyl-2-C-methyl-D-erythritol 2-phosphate (CDP-ME2P) to 2-C-methyl-D-erythritol 2,4-cyclodiphosphate (ME-CPP) with a corresponding release of cytidine 5-monophosphate (CMP). This Azotobacter vinelandii (strain DJ / ATCC BAA-1303) protein is 2-C-methyl-D-erythritol 2,4-cyclodiphosphate synthase.